The sequence spans 315 residues: NAD-dependent protein deacylase sirtuin-5, mitochondrial (315 aa).

A mitochondrion-targeting transit peptide spans 1–39; the sequence is MSLLHFATRRLILQVLRELGLKAPPVHKTLKICIAMSRP. One can recognise a Deacetylase sirtuin-type domain in the interval 40–312; sequence SSNMADFRRF…PEALSPHESE (273 aa). 61 to 80 contacts NAD(+); that stretch reads GAGVSAESGVPTFRGPGGFW. Substrate is bound by residues Tyr105 and Arg108. 143–146 contributes to the NAD(+) binding site; sequence QNID. The active-site Proton acceptor is the His161. Residues 254–256, 280–282, and Cys298 contribute to the NAD(+) site; these read GTS and NTV.

This sequence belongs to the sirtuin family. Class III subfamily. In terms of assembly, monomer. Homodimer. Interacts with CPS1.

The protein resides in the mitochondrion. Its subcellular location is the cytoplasm. It is found in the cytosol. It localises to the nucleus. The catalysed reaction is N(6)-malonyl-L-lysyl-[protein] + NAD(+) + H2O = 2''-O-malonyl-ADP-D-ribose + nicotinamide + L-lysyl-[protein]. It catalyses the reaction N(6)-succinyl-L-lysyl-[protein] + NAD(+) + H2O = 2''-O-succinyl-ADP-D-ribose + nicotinamide + L-lysyl-[protein]. The enzyme catalyses N(6)-glutaryl-L-lysyl-[protein] + NAD(+) + H2O = 2''-O-glutaryl-ADP-D-ribose + nicotinamide + L-lysyl-[protein]. NAD-dependent lysine demalonylase, desuccinylase and deglutarylase that specifically removes malonyl, succinyl and glutaryl groups on target proteins. Activates CPS1 and contributes to the regulation of blood ammonia levels during prolonged fasting: acts by mediating desuccinylation and deglutarylation of CPS1, thereby increasing CPS1 activity in response to elevated NAD levels during fasting. Activates SOD1 by mediating its desuccinylation, leading to reduced reactive oxygen species. Activates SHMT2 by mediating its desuccinylation. Modulates ketogenesis through the desuccinylation and activation of HMGCS2. Has weak NAD-dependent protein deacetylase activity; however this activity may not be physiologically relevant in vivo. Can deacetylate cytochrome c (CYCS) and a number of other proteins in vitro such as UOX. This Monodelphis domestica (Gray short-tailed opossum) protein is NAD-dependent protein deacylase sirtuin-5, mitochondrial.